The primary structure comprises 531 residues: Importin subunit alpha-2 (531 aa).

A compositionally biased stretch (polar residues) spans 1 to 10; sequence MTLTETSLSH. The interval 1–88 is disordered; it reads MTLTETSLSH…ISHQQSSTRL (88 aa). The IBB domain occupies 5–67; it reads ETSLSHNAEE…RNIVDVDEGG (63 aa). 2 stretches are compositionally biased toward basic and acidic residues: residues 11–20 and 29–50; these read NAEEGKDEGG and TKHE…KQKG. Residues 62 to 75 are compositionally biased toward acidic residues; the sequence is DVDEGGNSESELEE. 7 ARM repeats span residues 122–161, 164–203, 250–290, 293–331, 334–374, 377–416, and 420–459; these read NPPI…NIVS, TEQT…NIAG, KNPH…YLTD, DEQI…NVAT, DSLT…NIIA, QKQI…NLAQ, and NRQV…TLML. The segment at 511–531 is disordered; sequence DDAGEKESHENADPQDNKWSF. The span at 515-531 shows a compositional bias: basic and acidic residues; it reads EKESHENADPQDNKWSF.

This sequence belongs to the importin alpha family. As to quaternary structure, forms a complex with an importin beta subunit. Interacts with akir-1. In terms of tissue distribution, germline tissues. Expressed exclusively in germ line cells from the early embryonic through adult stages.

The protein resides in the cytoplasm. The protein localises to the nucleus. It is found in the nucleus envelope. In terms of biological role, nuclear transport receptor that mediates nuclear import of proteins, and which is involved in sister chromatid cohesion. Binds specifically and directly to substrates containing either a simple or bipartite nuclear localization signals (NLS) motif. Promotes docking of import substrates to the nuclear envelope. Together with akir-1 adapter, required for the import and load of cohesin complex proteins in meiotic nuclei. The polypeptide is Importin subunit alpha-2 (Caenorhabditis elegans).